The following is a 121-amino-acid chain: Large ribosomal subunit protein uL14c (121 aa).

The protein belongs to the universal ribosomal protein uL14 family. In terms of assembly, part of the 50S ribosomal subunit.

It localises to the plastid. The protein resides in the apicoplast. Functionally, binds to 23S rRNA. The protein is Large ribosomal subunit protein uL14c (rpl14) of Toxoplasma gondii.